We begin with the raw amino-acid sequence, 65 residues long: MAFDTKLMEILACPVCKGKLDYDKAAQELICHFDRLAYSIEKDIPVLLENEAREINANQSTEQDG.

This sequence belongs to the UPF0434 family.

The protein is UPF0434 protein CPS_2127 of Colwellia psychrerythraea (strain 34H / ATCC BAA-681) (Vibrio psychroerythus).